A 442-amino-acid chain; its full sequence is Exodeoxyribonuclease 7 large subunit (442 aa).

It belongs to the XseA family. As to quaternary structure, heterooligomer composed of large and small subunits.

The protein localises to the cytoplasm. It carries out the reaction Exonucleolytic cleavage in either 5'- to 3'- or 3'- to 5'-direction to yield nucleoside 5'-phosphates.. Its function is as follows. Bidirectionally degrades single-stranded DNA into large acid-insoluble oligonucleotides, which are then degraded further into small acid-soluble oligonucleotides. The polypeptide is Exodeoxyribonuclease 7 large subunit (Shewanella loihica (strain ATCC BAA-1088 / PV-4)).